Here is an 89-residue protein sequence, read N- to C-terminus: Large ribosomal subunit protein eL43 (89 aa).

Cysteine 38, cysteine 41, cysteine 56, and cysteine 59 together coordinate Zn(2+). The C4-type zinc-finger motif lies at 38–59; the sequence is CPVCHKRAVKRVGTGIWRCTKC.

Belongs to the eukaryotic ribosomal protein eL43 family. Putative zinc-binding subfamily. As to quaternary structure, part of the 50S ribosomal subunit. Requires Zn(2+) as cofactor.

Binds to the 23S rRNA. The polypeptide is Large ribosomal subunit protein eL43 (Methanopyrus kandleri (strain AV19 / DSM 6324 / JCM 9639 / NBRC 100938)).